A 455-amino-acid chain; its full sequence is UPF0210 protein Teth514_2074 (455 aa).

This sequence belongs to the UPF0210 family. Homodimer.

This chain is UPF0210 protein Teth514_2074, found in Thermoanaerobacter sp. (strain X514).